A 472-amino-acid chain; its full sequence is Adenosylhomocysteinase (472 aa).

Residues T61, D136, and E196 each coordinate substrate. 197 to 199 is a binding site for NAD(+); it reads TTT. The substrate site is built by K226 and D230. Residues N231, 260–265, E283, N318, 339–341, and N384 contribute to the NAD(+) site; these read GYGDVG and IGH.

The protein belongs to the adenosylhomocysteinase family. The cofactor is NAD(+).

The protein resides in the cytoplasm. It carries out the reaction S-adenosyl-L-homocysteine + H2O = L-homocysteine + adenosine. Its pathway is amino-acid biosynthesis; L-homocysteine biosynthesis; L-homocysteine from S-adenosyl-L-homocysteine: step 1/1. In terms of biological role, may play a key role in the regulation of the intracellular concentration of adenosylhomocysteine. This is Adenosylhomocysteinase from Cupriavidus metallidurans (strain ATCC 43123 / DSM 2839 / NBRC 102507 / CH34) (Ralstonia metallidurans).